Consider the following 202-residue polypeptide: MKDIEDLIQKAVELQSNGLAMGQIADELNVSRETVTWLLTRSKKEEITPAPKDISVNWNNIGKSAKRLHNISLALCDVALENLEKIGAEVDVVVGVAANGIPLASMMAYELGADLAIYHRKGQETVRAGKGTISRNFGSVAGKNCVIVDDVITTGSTSREVIEQLREMGAKPRVVVVLVDKKGVDTIFNVPIQSLLKVVRLD.

The protein belongs to the purine/pyrimidine phosphoribosyltransferase family. GfcR subfamily.

The polypeptide is Transcriptional regulator GfcR 2 (Methanosarcina barkeri (strain Fusaro / DSM 804)).